A 342-amino-acid chain; its full sequence is MTNLTLALDAMGGDFGPRITVPATLQALRLNPLLKIVLVGDKSQIDEHLVSAEPAIKNRIEIKHTTEVVAMSDRPVHALRNRKQSSMRLAIELVRDGKAQACLSAGNTGALMAMSKVLLKTLPGIDRPALVTCLPAVNNTPVYLLDLGANISCDSETLFQFAVMGSVLSETVDKTASPKVALLNVGIEEIKGNDQVQQAGQLLQQIPQINYTGFIEGDEIYSGNVDVIVCDGFVGNITLKTSEGIARLLVHQLKKALGQGFFVRLLAKIIAPRIRSLLNQMNPDHYNGASLIGLRGIVVKSHGCADEAAFLQAITLAVTEAQRRLPQMIEDRLESILLDINS.

This sequence belongs to the PlsX family. Homodimer. Probably interacts with PlsY.

Its subcellular location is the cytoplasm. The enzyme catalyses a fatty acyl-[ACP] + phosphate = an acyl phosphate + holo-[ACP]. It functions in the pathway lipid metabolism; phospholipid metabolism. Catalyzes the reversible formation of acyl-phosphate (acyl-PO(4)) from acyl-[acyl-carrier-protein] (acyl-ACP). This enzyme utilizes acyl-ACP as fatty acyl donor, but not acyl-CoA. The polypeptide is Phosphate acyltransferase (Shewanella halifaxensis (strain HAW-EB4)).